The chain runs to 152 residues: Protein SprT-like (152 aa).

One can recognise a SprT-like domain in the interval 6 to 151; that stretch reads LQQLVCRISL…SKCLGKLELL (146 aa). A Zn(2+)-binding site is contributed by His-67. Glu-68 is an active-site residue. His-71 is a Zn(2+) binding site.

Belongs to the SprT family. Zn(2+) is required as a cofactor.

The protein resides in the cytoplasm. This Lysinibacillus sphaericus (strain C3-41) protein is Protein SprT-like.